Here is a 365-residue protein sequence, read N- to C-terminus: Terpene cyclase DEP1 (365 aa).

8 consecutive transmembrane segments (helical) span residues 10–30 (LYLS…NGMF), 82–102 (LLFF…LIES), 116–136 (AWAM…IYLY), 158–178 (LPII…PAWF), 188–208 (ALIA…VGIT), 233–253 (LILA…GALF), 297–317 (LFSQ…AQLL), and 338–358 (MIYL…SFAL).

Belongs to the membrane-bound ascI terpene cyclase family.

The protein resides in the membrane. It functions in the pathway polyketide biosynthesis. In terms of biological role, part of the gene cluster that mediates the biosynthesis of depudecin, a highly oxidized eleven-carbon linear polyketide that acts as a histone deacetylase (HDAC) inhibitor and makes a small contribution to pathogenesis. The reducing polyketide synthase DEP5 is the central enzyme in depudecin biosynthesis by yielding the backbone polyketide chain. The monooxygenases DEP2 and DEP4, as well as the uncharacterized protein DEP1, then act as tailoring enzymes to modify the intermediate polyketide chain into depudecin. This chain is Terpene cyclase DEP1, found in Fusarium langsethiae.